Reading from the N-terminus, the 258-residue chain is HVA22-like protein j (258 aa).

Residues 153-258 (AANQPPTERN…RSNSRTQPAA (106 aa)) are disordered. The span at 156–169 (QPPTERNVNMNAQS) shows a compositional bias: polar residues. Residues 206–215 (WPPPTPPPTP) are compositionally biased toward pro residues.

This sequence belongs to the DP1 family.

The chain is HVA22-like protein j (HVA22J) from Arabidopsis thaliana (Mouse-ear cress).